Consider the following 204-residue polypeptide: Peptide deformylase (204 aa).

Fe cation is bound by residues Cys131 and His174. Glu175 is a catalytic residue. His178 lines the Fe cation pocket.

Belongs to the polypeptide deformylase family. The cofactor is Fe(2+).

The catalysed reaction is N-terminal N-formyl-L-methionyl-[peptide] + H2O = N-terminal L-methionyl-[peptide] + formate. Functionally, removes the formyl group from the N-terminal Met of newly synthesized proteins. Requires at least a dipeptide for an efficient rate of reaction. N-terminal L-methionine is a prerequisite for activity but the enzyme has broad specificity at other positions. The chain is Peptide deformylase from Streptococcus agalactiae serotype III (strain NEM316).